The following is a 96-amino-acid chain: uncharacterized protein (96 aa).

A run of 3 helical transmembrane segments spans residues 3–23 (KLTI…QLFA), 30–50 (TLGN…LASI), and 68–88 (IGLL…IIII).

It localises to the cell membrane. This is an uncharacterized protein from Bacillus subtilis (strain 168).